The following is a 1403-amino-acid chain: MKDIFNFFEKPKDPLSFNAIRIALASPDKIRQWSHGEVKKPETINYRTFKPERDGLFCARIFGPVKDYECNCGKYKRMKHRGVVCEKCGVEVIQSKVRRERLGHITLATPVAHIWFLKSLPSRIGNLLDITLKELEKVLYCESYIVLDPKATPLQKGELISEDKMHRLYQEHGEDSFTTGMGGEAVREMLKSLDVEKLSEELRKDMRETTSEAKRKKYAKRLKVAEAFRVSGNKPEWMMLDVIPVIPPDLRPLVPLDGGRFATSDLNDLYRRVINRNNRLKRLQELNAPDIIIRNEKRMLQEAVDALFDNGRRGKTITGPNKRPLKSLSDMLKGKQGRFRQNLLGKRVDYSGRSVIVVGPELRLHQCGLPKIMALELFKPFIYNKLEEKGYVTTIKSAKKMVEKERPEVWDILEDVIREHPVLLNRAPTLHRLGMQAFEPVLIEGKAIQLHPLVCAAFNADFDGDQMAVHVPLSIEAQMEARVLMMSTNNILSPANGKPIIVPTQDMVLGIYYMTRAREFAGGEGRVFASPDEVRAAYDHGEVHLQAKVVCRIDGKRKETTVGRVLLWEVVPRAVGFDAINKVLDKKSLGGLIDLCYRLTGEKETVLLADRVRSLGYYNATRAGISIALKDMIIPAKKQEFLDFARKEVSEIENQYLEGLITDGERYNKVIDIWAEITEKVAQEMMQQISQEETTGDRDGKRETRKQPSFNPIYIMADSGARGSAQQIRQLAGMRGLMAKPSGEIIETPITANFREGLSVLQYFISTHGARKGLADTALKTANSGYLTRRLVDVAQDAIINEYDCGTMDGLFIGALVEGGEIIEPLGERILGRVALDDILDPVTGEVLVRANEEIDEDRVRRIENSGMDKVKIRSVLTCQAKRGICVECYGRDLARGRKVSVGEAVGVIAAQSIGEPGTQLTMRTFHIGGAATRRAEQSSLENRYAGSVKFAGLVTVQKTDGTLVAMNRNGEIVVVDDSGRERERYQVIYGARILVKEGQRIEPGVLMAEWDPFAIPLLTEVGGVVRYEDIIEGVTMSEALDEVTGLSRKTVIESKDPEARPRVTIRDANGNMMDLPSSRNPASYFLPQGSIITVNDGDEIHPGEVIAKVPRETTKTKDITGGLPRVAELFEARKPKDAAAIAEIDGVVSFGKDTKGKRKLIITPEVNGEQRTDLAKEYLISKGKNISVHSGDRVKAGEAMMDGSANPHDILKVLGEKELARYLVDEVQEVYRLQGVKINDKHIETIVRQMLRRVRVTDVGDTNFLVDEQVEKWVFEEENEKVMSEGKRPAVGEPLLLGITKASLSTESFISASSFQETTKVLTEAAINGKVDYLRGLKENVIMGRLIPAGTGLPNYKHLDIAVESPTDEVNEMEAALAATHGDTGPLGEPSRPVGTQTTGAA.

Residues Cys-70, Cys-72, Cys-85, and Cys-88 each contribute to the Zn(2+) site. Mg(2+) contacts are provided by Asp-461, Asp-463, and Asp-465. The segment at Gln-687 to Pro-708 is disordered. Positions Thr-695–Lys-706 are enriched in basic and acidic residues. Positions 805, 879, 886, and 889 each coordinate Zn(2+). A disordered region spans residues Thr-1381 to Ala-1403.

It belongs to the RNA polymerase beta' chain family. The RNAP catalytic core consists of 2 alpha, 1 beta, 1 beta' and 1 omega subunit. When a sigma factor is associated with the core the holoenzyme is formed, which can initiate transcription. Requires Mg(2+) as cofactor. It depends on Zn(2+) as a cofactor.

The catalysed reaction is RNA(n) + a ribonucleoside 5'-triphosphate = RNA(n+1) + diphosphate. Its function is as follows. DNA-dependent RNA polymerase catalyzes the transcription of DNA into RNA using the four ribonucleoside triphosphates as substrates. This Myxococcus xanthus (strain DK1622) protein is DNA-directed RNA polymerase subunit beta'.